The sequence spans 314 residues: Aspartate carbamoyltransferase catalytic subunit (314 aa).

2 residues coordinate carbamoyl phosphate: arginine 64 and threonine 65. Residue lysine 92 coordinates L-aspartate. Carbamoyl phosphate is bound by residues arginine 114, histidine 142, and glutamine 145. Arginine 175 and arginine 230 together coordinate L-aspartate. Carbamoyl phosphate contacts are provided by glycine 271 and proline 272.

Belongs to the aspartate/ornithine carbamoyltransferase superfamily. ATCase family. As to quaternary structure, heterododecamer (2C3:3R2) of six catalytic PyrB chains organized as two trimers (C3), and six regulatory PyrI chains organized as three dimers (R2).

The enzyme catalyses carbamoyl phosphate + L-aspartate = N-carbamoyl-L-aspartate + phosphate + H(+). The protein operates within pyrimidine metabolism; UMP biosynthesis via de novo pathway; (S)-dihydroorotate from bicarbonate: step 2/3. Catalyzes the condensation of carbamoyl phosphate and aspartate to form carbamoyl aspartate and inorganic phosphate, the committed step in the de novo pyrimidine nucleotide biosynthesis pathway. This chain is Aspartate carbamoyltransferase catalytic subunit, found in Deinococcus radiodurans (strain ATCC 13939 / DSM 20539 / JCM 16871 / CCUG 27074 / LMG 4051 / NBRC 15346 / NCIMB 9279 / VKM B-1422 / R1).